Here is a 367-residue protein sequence, read N- to C-terminus: Queuine tRNA-ribosyltransferase (367 aa).

The Proton acceptor role is filled by aspartate 92. Residues 92-96 (DSGGF), aspartate 146, glutamine 188, and glycine 215 each bind substrate. The segment at 246–252 (GVGTPKD) is RNA binding. Catalysis depends on aspartate 265, which acts as the Nucleophile. 4 residues coordinate Zn(2+): cysteine 303, cysteine 305, cysteine 308, and histidine 334.

This sequence belongs to the queuine tRNA-ribosyltransferase family. As to quaternary structure, homodimer. Within each dimer, one monomer is responsible for RNA recognition and catalysis, while the other monomer binds to the replacement base PreQ1. Zn(2+) serves as cofactor.

It carries out the reaction 7-aminomethyl-7-carbaguanine + guanosine(34) in tRNA = 7-aminomethyl-7-carbaguanosine(34) in tRNA + guanine. Its pathway is tRNA modification; tRNA-queuosine biosynthesis. Functionally, catalyzes the base-exchange of a guanine (G) residue with the queuine precursor 7-aminomethyl-7-deazaguanine (PreQ1) at position 34 (anticodon wobble position) in tRNAs with GU(N) anticodons (tRNA-Asp, -Asn, -His and -Tyr). Catalysis occurs through a double-displacement mechanism. The nucleophile active site attacks the C1' of nucleotide 34 to detach the guanine base from the RNA, forming a covalent enzyme-RNA intermediate. The proton acceptor active site deprotonates the incoming PreQ1, allowing a nucleophilic attack on the C1' of the ribose to form the product. After dissociation, two additional enzymatic reactions on the tRNA convert PreQ1 to queuine (Q), resulting in the hypermodified nucleoside queuosine (7-(((4,5-cis-dihydroxy-2-cyclopenten-1-yl)amino)methyl)-7-deazaguanosine). The protein is Queuine tRNA-ribosyltransferase of Francisella tularensis subsp. holarctica (strain FTNF002-00 / FTA).